A 493-amino-acid polypeptide reads, in one-letter code: MNRVAVVVLGDIGRSPRMQYHSMSLSKLENTKVTLIGYRESEPHPQIVNNDSITIEPLKPFPISMSNSFKKIPLISIFMWPLLAICKVLFQIIQLMYVLLVKVPSPLNTILVQSPPAIPTIFVMQIVCWIRGVHLVIDWHNLGYTLLKLSLSKSDNHPIIRLAKFIERYFAKNAYAHLFVTNEMKIQLVRDWNLKGKTFVFHDKASPIFKSLTDREQEEFLKTFINKYSIKGEDKVYIESVISKKSIRNPKQQTSIIISSTSWTQDEDFSILLDAIVKYDIEHAINNNNNKVEEAQDESVVLAENLLFIITGKGPQKEYYQEKINSLSLKKSRIITVWLDSEDYPKLLACCDLGVSLHNSSSGIDLPMKVVDMFGCCLPVLAIDFKCIGELVKVNYNGFLFKDSDQLHQLLNQLFTHPTNNNTITNTNNNKNLILEKMRKNLTKDRETDTWESNWLTIKPLFIPSSSSSSSSSSSSSSSSSSSSSSNSKSKKD.

Residues 1-71 (MNRVAVVVLG…PISMSNSFKK (71 aa)) are Lumenal-facing. The chain crosses the membrane as a helical span at residues 72 to 92 (IPLISIFMWPLLAICKVLFQI). Residues 93-109 (IQLMYVLLVKVPSPLNT) are Cytoplasmic-facing. An intramembrane region (helical) is located at residues 110-130 (ILVQSPPAIPTIFVMQIVCWI). Topologically, residues 131 to 493 (RGVHLVIDWH…SSSNSKSKKD (363 aa)) are cytoplasmic. Positions 462-493 (FIPSSSSSSSSSSSSSSSSSSSSSSNSKSKKD) are disordered. The span at 465-493 (SSSSSSSSSSSSSSSSSSSSSSNSKSKKD) shows a compositional bias: low complexity.

Belongs to the glycosyltransferase group 1 family. Glycosyltransferase 33 subfamily.

The protein resides in the endoplasmic reticulum membrane. The catalysed reaction is an N,N'-diacetylchitobiosyl-diphospho-di-trans,poly-cis-dolichol + GDP-alpha-D-mannose = a beta-D-Man-(1-&gt;4)-beta-D-GlcNAc-(1-&gt;4)-alpha-D-GlcNAc-diphospho-di-trans,poly-cis-dolichol + GDP + H(+). Its pathway is protein modification; protein glycosylation. Participates in the formation of the lipid-linked precursor oligosaccharide for N-glycosylation. Involved in assembling the dolichol-pyrophosphate-GlcNAc(2)-Man(5) intermediate on the cytoplasmic surface of the ER. The chain is Chitobiosyldiphosphodolichol beta-mannosyltransferase (alg1) from Dictyostelium discoideum (Social amoeba).